Here is a 444-residue protein sequence, read N- to C-terminus: ATP-dependent protease ATPase subunit HslU (444 aa).

Residues I18, 60–65, D256, E321, and R393 contribute to the ATP site; that span reads GVGKTE.

It belongs to the ClpX chaperone family. HslU subfamily. A double ring-shaped homohexamer of HslV is capped on each side by a ring-shaped HslU homohexamer. The assembly of the HslU/HslV complex is dependent on binding of ATP.

The protein localises to the cytoplasm. In terms of biological role, ATPase subunit of a proteasome-like degradation complex; this subunit has chaperone activity. The binding of ATP and its subsequent hydrolysis by HslU are essential for unfolding of protein substrates subsequently hydrolyzed by HslV. HslU recognizes the N-terminal part of its protein substrates and unfolds these before they are guided to HslV for hydrolysis. The protein is ATP-dependent protease ATPase subunit HslU of Buchnera aphidicola subsp. Baizongia pistaciae (strain Bp).